The sequence spans 553 residues: Hydroxylamine reductase (553 aa).

[2Fe-2S] cluster is bound by residues C3, C6, C18, and C25. Hybrid [4Fe-2O-2S] cluster contacts are provided by H252, E276, C320, C408, C436, C461, E495, and K497. At C408 the chain carries Cysteine persulfide.

Belongs to the HCP family. Requires [2Fe-2S] cluster as cofactor. Hybrid [4Fe-2O-2S] cluster serves as cofactor.

It is found in the cytoplasm. It carries out the reaction A + NH4(+) + H2O = hydroxylamine + AH2 + H(+). In terms of biological role, catalyzes the reduction of hydroxylamine to form NH(3) and H(2)O. This Tolumonas auensis (strain DSM 9187 / NBRC 110442 / TA 4) protein is Hydroxylamine reductase.